Here is a 193-residue protein sequence, read N- to C-terminus: Ion-translocating oxidoreductase complex subunit A (193 aa).

Helical transmembrane passes span 5 to 25, 39 to 59, 62 to 82, 102 to 122, 134 to 154, and 171 to 191; these read LMLF…FLGL, LGMG…AWLI, FILL…FIIA, LLGI…VALL, ALYG…FAAI, and SIAL…TGLV.

The protein belongs to the NqrDE/RnfAE family. In terms of assembly, the complex is composed of six subunits: RnfA, RnfB, RnfC, RnfD, RnfE and RnfG.

It localises to the cell inner membrane. Part of a membrane-bound complex that couples electron transfer with translocation of ions across the membrane. The chain is Ion-translocating oxidoreductase complex subunit A from Sodalis glossinidius (strain morsitans).